We begin with the raw amino-acid sequence, 792 residues long: X-ray radiation resistance-associated protein 1 (792 aa).

LRR repeat units follow at residues 104-125 (DLCT…IYIN), 141-155 (ALKE…IKTI), 164-184 (LLEF…CDLG), 188-209 (HLRV…LAVA), 229-250 (ALET…ASLA), and 254-275 (RLKK…QQVQ). 3 disordered regions span residues 490–517 (AEDL…SPSC), 537–562 (TLSH…KSTE), and 577–601 (IHKD…EVKG). The segment covering 549–560 (SPERPSDEDSKS) has biased composition (basic and acidic residues). Residues 723–745 (HKQYLEAKRLLKEFQARYRQLVS) adopt a coiled-coil conformation.

As to expression, expressed predominantly in testis followed by prostate and ovary. Low levels found in other tissues including peripheral blood leukocytes, spleen, thymus, small intestine and colon. Also expressed in neuroblastoma, glioma, breast, lung, leukemia, renal, ovarian, prostate and colorectal cancer cell lines.

Its subcellular location is the cytoplasm. The protein localises to the nucleus. Its function is as follows. May be involved in the response of cells to X-ray radiation. The protein is X-ray radiation resistance-associated protein 1 of Homo sapiens (Human).